The sequence spans 453 residues: Trigger factor (453 aa).

The 86-residue stretch at 171 to 256 folds into the PPIase FKBP-type domain; the sequence is GDRVTVSFKG…ATKVEAPQDV (86 aa).

This sequence belongs to the FKBP-type PPIase family. Tig subfamily.

Its subcellular location is the cytoplasm. It carries out the reaction [protein]-peptidylproline (omega=180) = [protein]-peptidylproline (omega=0). Functionally, involved in protein export. Acts as a chaperone by maintaining the newly synthesized protein in an open conformation. Functions as a peptidyl-prolyl cis-trans isomerase. This is Trigger factor from Rhodopseudomonas palustris (strain BisB5).